We begin with the raw amino-acid sequence, 159 residues long: Large ribosomal subunit protein mL50 (159 aa).

This sequence belongs to the mitochondrion-specific ribosomal protein mL50 family. Component of the mitochondrial ribosome large subunit (39S) which comprises a 16S rRNA and about 50 distinct proteins.

It is found in the mitochondrion. The chain is Large ribosomal subunit protein mL50 (MRPL50) from Bos taurus (Bovine).